The primary structure comprises 517 residues: Aldehyde dehydrogenase X, mitochondrial (517 aa).

Residues 1-17 (MLRFLAPRLLSLQGRTA) constitute a mitochondrion transit peptide. Lys-51 is modified (N6-acetyllysine). Lys-52 bears the N6-acetyllysine; alternate mark. The residue at position 52 (Lys-52) is an N6-succinyllysine; alternate. Lys-81 carries the N6-succinyllysine modification. 262–267 (GSTEVG) contacts NAD(+). The active-site Proton acceptor is Glu-285. Cys-319 serves as the catalytic Nucleophile. Lys-364, Lys-383, Lys-399, Lys-414, and Lys-426 each carry N6-acetyllysine; alternate. Lys-364, Lys-383, Lys-399, Lys-414, and Lys-426 each carry N6-succinyllysine; alternate. The residue at position 429 (Lys-429) is an N6-acetyllysine.

Belongs to the aldehyde dehydrogenase family. As to quaternary structure, homotetramer. Liver, testis and to a lesser extent in brain.

The protein localises to the mitochondrion matrix. The catalysed reaction is an aldehyde + NAD(+) + H2O = a carboxylate + NADH + 2 H(+). Its pathway is alcohol metabolism; ethanol degradation; acetate from ethanol: step 2/2. Its function is as follows. ALDHs play a major role in the detoxification of alcohol-derived acetaldehyde. They are involved in the metabolism of corticosteroids, biogenic amines, neurotransmitters, and lipid peroxidation. This is Aldehyde dehydrogenase X, mitochondrial (ALDH1B1) from Homo sapiens (Human).